Reading from the N-terminus, the 93-residue chain is Small ribosomal subunit protein uS19 (93 aa).

Belongs to the universal ribosomal protein uS19 family.

In terms of biological role, protein S19 forms a complex with S13 that binds strongly to the 16S ribosomal RNA. The chain is Small ribosomal subunit protein uS19 from Parafrankia sp. (strain EAN1pec).